The chain runs to 1209 residues: Major DNA-binding protein (1209 aa).

The tract at residues 290-312 is disordered; it reads NAGKGSGRAQRQGDGSGSKNSAS. Residues 503-516 fold into a zinc finger; that stretch reads CGLCNQATRPACAH. A Required for filament formation motif is present at residues 849–850; sequence FW. A required for nuclear localization region spans residues 1182–1209; that stretch reads QKRSLPDDILFDMGAPPEKKSGLTFDML.

The protein belongs to the herpesviridae major DNA-binding protein family. Homooligomers. Forms double-helical filaments necessary for the formation of replication compartments within the host nucleus. Interacts with the origin-binding protein. Interacts with the helicase primase complex; this interaction stimulates primer synthesis activity of the helicase-primase complex. Interacts with the DNA polymerase. Interacts with the alkaline exonuclease; this interaction increases its nuclease processivity.

It localises to the host nucleus. Functionally, plays several crucial roles in viral infection. Participates in the opening of the viral DNA origin to initiate replication by interacting with the origin-binding protein. May disrupt loops, hairpins and other secondary structures present on ssDNA to reduce and eliminate pausing of viral DNA polymerase at specific sites during elongation. Promotes viral DNA recombination by performing strand-transfer, characterized by the ability to transfer a DNA strand from a linear duplex to a complementary single-stranded DNA circle. Can also catalyze the renaturation of complementary single strands. Additionally, reorganizes the host cell nucleus, leading to the formation of prereplicative sites and replication compartments. This process is driven by the protein which can form double-helical filaments in the absence of DNA. This Equine herpesvirus 1 (strain V592) (EHV-1) protein is Major DNA-binding protein.